A 248-amino-acid chain; its full sequence is DNA repair protein RecO (248 aa).

It belongs to the RecO family.

Involved in DNA repair and RecF pathway recombination. The chain is DNA repair protein RecO from Oleidesulfovibrio alaskensis (strain ATCC BAA-1058 / DSM 17464 / G20) (Desulfovibrio alaskensis).